The following is a 174-amino-acid chain: Peptide deformylase (174 aa).

Fe cation contacts are provided by cysteine 98 and histidine 140. The active site involves glutamate 141. Histidine 144 is a binding site for Fe cation.

This sequence belongs to the polypeptide deformylase family. Requires Fe(2+) as cofactor.

It catalyses the reaction N-terminal N-formyl-L-methionyl-[peptide] + H2O = N-terminal L-methionyl-[peptide] + formate. In terms of biological role, removes the formyl group from the N-terminal Met of newly synthesized proteins. Requires at least a dipeptide for an efficient rate of reaction. N-terminal L-methionine is a prerequisite for activity but the enzyme has broad specificity at other positions. The chain is Peptide deformylase from Bradyrhizobium diazoefficiens (strain JCM 10833 / BCRC 13528 / IAM 13628 / NBRC 14792 / USDA 110).